The following is a 151-amino-acid chain: Macrodomain Ter protein (151 aa).

The protein belongs to the MatP family. In terms of assembly, homodimer.

The protein resides in the cytoplasm. In terms of biological role, required for spatial organization of the terminus region of the chromosome (Ter macrodomain) during the cell cycle. Prevents early segregation of duplicated Ter macrodomains during cell division. Binds specifically to matS, which is a 13 bp signature motif repeated within the Ter macrodomain. The sequence is that of Macrodomain Ter protein from Cronobacter sakazakii (strain ATCC BAA-894) (Enterobacter sakazakii).